The chain runs to 379 residues: Polycomb group protein FIE2 (379 aa).

WD repeat units follow at residues 85–128 (DKDE…LAKS), 131–171 (GHGD…CILI), 177–217 (GHRN…LYVD), 243–280 (VHSN…QSPG), 292–333 (VPEC…PVLI), and 340–378 (QCKS…PSSR).

It belongs to the WD repeat ESC family. Widely expressed. Expressed in the embryo sac before pollination. After pollination, its expression persists, predominantly in the embryo and at lower levels in the endosperm.

It localises to the nucleus. Its function is as follows. Polycomb group (PcG) protein. PcG proteins act by forming multiprotein complexes, which are required to maintain the transcriptionally repressive state of homeotic genes throughout development. PcG proteins are not required to initiate repression, but to maintain it during later stages of development. They probably act via the methylation of histones, rendering chromatin heritably changed in its expressibility. The chain is Polycomb group protein FIE2 (FIE2) from Zea mays (Maize).